A 430-amino-acid polypeptide reads, in one-letter code: Replication factor C large subunit (430 aa).

An ATP-binding site is contributed by 75 to 82 (GPPGTGKT).

The protein belongs to the activator 1 small subunits family. RfcL subfamily. Heteromultimer composed of small subunits (RfcS) and large subunits (RfcL).

In terms of biological role, part of the RFC clamp loader complex which loads the PCNA sliding clamp onto DNA. This is Replication factor C large subunit from Nanoarchaeum equitans (strain Kin4-M).